Consider the following 182-residue polypeptide: AICACCKVLNSNEKASCFSNKTFKGLGNAGGLPWKCNSVDMKHFVSVTSYVNENNYIRLKWKRDKYIKENNVKVNTDGIPSIDKLQNIVVMGKTSWESIPSKFKPLENRINIILSRTLKKENLAKEYSNVIIIKSVDELFPILKCIKYYKCFIIGGASVYKEFLDRNLIKKIYFTRINNAYT.

Positions 1–182 constitute a DHFR domain; it reads AICACCKVLN…YFTRINNAYT (182 aa). 25–31 provides a ligand contact to NADP(+); that stretch reads GLGNAGG. Aspartate 40 contributes to the substrate binding site. NADP(+) contacts are provided by residues 93 to 95 and 114 to 117; these read KTS and LSRT. Substrate-binding residues include isoleucine 154, tyrosine 160, and threonine 175. Residue 155-162 coordinates NADP(+); sequence GGASVYKE.

The protein in the N-terminal section; belongs to the dihydrofolate reductase family. This sequence in the C-terminal section; belongs to the thymidylate synthase family. As to quaternary structure, homodimer.

The enzyme catalyses (6S)-5,6,7,8-tetrahydrofolate + NADP(+) = 7,8-dihydrofolate + NADPH + H(+). It catalyses the reaction dUMP + (6R)-5,10-methylene-5,6,7,8-tetrahydrofolate = 7,8-dihydrofolate + dTMP. Its pathway is cofactor biosynthesis; tetrahydrofolate biosynthesis; 5,6,7,8-tetrahydrofolate from 7,8-dihydrofolate: step 1/1. Its function is as follows. Bifunctional enzyme. Involved in de novo dTMP biosynthesis. Key enzyme in folate metabolism. Catalyzes an essential reaction for de novo glycine and purine synthesis, DNA precursor synthesis, and for the conversion of dUMP to dTMP. The sequence is that of Bifunctional dihydrofolate reductase-thymidylate synthase from Plasmodium vinckei.